A 313-amino-acid chain; its full sequence is uncharacterized protein (313 aa).

9 helical membrane-spanning segments follow: residues 31–53, 62–84, 104–126, 147–161, 166–185, 198–220, 225–244, 264–282, and 286–308; these read AWGI…GWLF, LFLF…WNPY, VFFW…IYTS, FALL…NQSV, SMFW…SFLL, RVLK…ALRF, SFSG…YLII, FFAA…TSSF, and PAAM…SILI.

It is found in the cell membrane. This is an uncharacterized protein from Archaeoglobus fulgidus (strain ATCC 49558 / DSM 4304 / JCM 9628 / NBRC 100126 / VC-16).